A 228-amino-acid polypeptide reads, in one-letter code: Small ribosomal subunit protein uS3 (228 aa).

The 69-residue stretch at 39-107 folds into the KH type-2 domain; the sequence is TREYLQDKLK…PVHINIEEIR (69 aa).

This sequence belongs to the universal ribosomal protein uS3 family. As to quaternary structure, part of the 30S ribosomal subunit. Forms a tight complex with proteins S10 and S14.

Its function is as follows. Binds the lower part of the 30S subunit head. Binds mRNA in the 70S ribosome, positioning it for translation. The protein is Small ribosomal subunit protein uS3 of Pseudomonas entomophila (strain L48).